The primary structure comprises 180 residues: Putative 5'(3')-deoxyribonucleotidase (180 aa).

Asp-9 (nucleophile) is an active-site residue. Mg(2+) contacts are provided by Asp-9, Asp-11, and Asp-135. The active-site Proton donor is the Asp-11.

It belongs to the 5'(3')-deoxyribonucleotidase family. The cofactor is Mg(2+).

Dephosphorylates the 5' and 2'(3')-phosphates of deoxyribonucleotides. In Staphylococcus aureus (strain MSSA476), this protein is Putative 5'(3')-deoxyribonucleotidase.